A 341-amino-acid polypeptide reads, in one-letter code: MSEPARIAINGFGRIGRSFLRALYENGYRDSVQVVLINEPAASEAIAHLLKYDSSHGRFGEKVTQSGDALTVAGDNIALTHQTEIEAIDWRAHEVDFVVDCTGVFGSQADGQLYLQQGVKRVLFSHPGKPDVDFTAIYGVNEKELTVDHKVVSNGSCTTNCIVPVIKVLDDAFGIDSGAITTIHSAMHDQQVIDAYHPDLRRTRAAGRSIIPVDTRLARGIERILPHLEGRFEAIAVRVPTTNVTAMDLSVTLNSDATIEQINQVLREQSERQLAGILDYTEEPLVSIDFNHDPHSSIVDGTQTRVSHKRLVKLLCWCDNEWGFANRLLDTAKTMAEQTEH.

NAD(+) is bound at residue 14–15 (RI). Residues 156–158 (SCT), Arg202, 215–216 (TR), and Arg238 contribute to the substrate site. Cys157 acts as the Nucleophile in catalysis. Position 320 (Asn320) interacts with NAD(+).

Belongs to the glyceraldehyde-3-phosphate dehydrogenase family. Epd subfamily. As to quaternary structure, homotetramer.

It localises to the cytoplasm. The catalysed reaction is D-erythrose 4-phosphate + NAD(+) + H2O = 4-phospho-D-erythronate + NADH + 2 H(+). It participates in cofactor biosynthesis; pyridoxine 5'-phosphate biosynthesis; pyridoxine 5'-phosphate from D-erythrose 4-phosphate: step 1/5. Its function is as follows. Catalyzes the NAD-dependent conversion of D-erythrose 4-phosphate to 4-phosphoerythronate. This is D-erythrose-4-phosphate dehydrogenase from Idiomarina loihiensis (strain ATCC BAA-735 / DSM 15497 / L2-TR).